A 32-amino-acid chain; its full sequence is Alcohol dehydrogenase-related 31 kDa protein (32 aa).

Tyr-11–Ala-32 is a binding site for NAD(+).

This sequence belongs to the short-chain dehydrogenases/reductases (SDR) family.

This Drosophila yakuba (Fruit fly) protein is Alcohol dehydrogenase-related 31 kDa protein (Adhr).